A 98-amino-acid polypeptide reads, in one-letter code: MAAETLTELEAAIETVVSTFFTFAGREGRKGSLNINEFKELATQQLPHLLKDVGSLDEKMKTLDVNQDSELRFSEYWRLIGELAKEVRKEKALGIRKK.

In terms of domain architecture, EF-hand spans 18–53 (STFFTFAGREGRKGSLNINEFKELATQQLPHLLKDV). Serine 32, glutamate 37, aspartate 64, asparagine 66, aspartate 68, glutamate 70, and glutamate 75 together coordinate Ca(2+). Serine 32 bears the Phosphoserine mark.

It belongs to the S-100 family. Homodimer. Part of a copper-dependent multiprotein complex containing S100A13, FGF1 and SYT1. Interacts with FGF1 and SYT1. Interacts with IL1A.

Its subcellular location is the cytoplasm. It is found in the secreted. Its function is as follows. Plays a role in the export of proteins that lack a signal peptide and are secreted by an alternative pathway. Binds two calcium ions per subunit. Binds one copper ion. Binding of one copper ion does not interfere with calcium binding. Required for the copper-dependent stress-induced export of IL1A and FGF1. The calcium-free protein binds to lipid vesicles containing phosphatidylserine, but not to vesicles containing phosphatidylcholine. This Mus musculus (Mouse) protein is Protein S100-A13 (S100a13).